Reading from the N-terminus, the 370-residue chain is Endopolygalacturonase A (370 aa).

Positions 1-19 (MPSAKPLFCLATLAGAALA) are cleaved as a signal peptide. Positions 20 to 32 (APAPSRATDFNKR) are excised as a propeptide. C35 and C50 are disulfide-bonded. PbH1 repeat units follow at residues 162 to 192 (SDNL…DISE), 193 to 214 (STYI…AINS), 215 to 235 (GENI…SIGS), 244 to 265 (VKNV…RIKT), 273 to 295 (VEDI…VIEQ), and 307 to 352 (SNGV…DITG). Cysteines 209 and 225 form a disulfide. H229 is an active-site residue. A glycan (N-linked (GlcNAc...) asparagine) is linked at N246. 2 disulfides stabilise this stretch: C335/C340 and C359/C368.

The protein belongs to the glycosyl hydrolase 28 family.

It localises to the secreted. The enzyme catalyses (1,4-alpha-D-galacturonosyl)n+m + H2O = (1,4-alpha-D-galacturonosyl)n + (1,4-alpha-D-galacturonosyl)m.. Its function is as follows. Involved in maceration and soft-rotting of plant tissue. Hydrolyzes the 1,4-alpha glycosidic bonds of de-esterified pectate in the smooth region of the plant cell wall. The chain is Endopolygalacturonase A (pgaA) from Aspergillus awamori (Black koji mold).